Here is a 550-residue protein sequence, read N- to C-terminus: MAAKDVKFGNDARVKMLRGVNVLADAVKVTLGPKGRNVVLDKSFGAPAITKDGVTVAREIELEDKFENMGAQMVKEVASKANDAAGDGTTTATVLAQSIVTEGLKAVAAGMNPMDLKRGVDKAVIAAVEELKCLSVPCSDFKAIAQVGTISANSDETVGKLIAEAMEKVGKEGVITVEEGTGLQDELDVVEGMQFDRGYLSPYFINKPDTGSIELDNPFILLADKKISNNREMLPPLESVAKAGNLLIIAEDVEGEALATLVVNTMRGIVKVAAVKAPGFGDRRKAMLQDIATLTGSTVISEEIGLELEKTTIEDLGHAKRVVINKDTTTIIDGIGNESAIKGRVVQIRQQIEEATSDYDREKLQERVAKLAGGVAVIKVGAATEVEMKEKKARVEDALHATRAAVEEGVVAGGGVALIRVAGKISSLTGENEDQNVGIKVAIRAMESPLRQIVINAGEEASVIANNVKAGKGNYGYNAYSEQYGDMIKMGILDPTKVTRSALQYAASVAGLMITTECMITDLPKSDSSDLSNAGNGGMGGGMGGMGGMM.

Residues 30–33 (TLGP), K51, 87–91 (DGTTT), G414, and D494 contribute to the ATP site.

The protein belongs to the chaperonin (HSP60) family. In terms of assembly, forms a cylinder of 14 subunits composed of two heptameric rings stacked back-to-back. Interacts with the co-chaperonin GroES.

It localises to the cytoplasm. The enzyme catalyses ATP + H2O + a folded polypeptide = ADP + phosphate + an unfolded polypeptide.. Functionally, together with its co-chaperonin GroES, plays an essential role in assisting protein folding. The GroEL-GroES system forms a nano-cage that allows encapsulation of the non-native substrate proteins and provides a physical environment optimized to promote and accelerate protein folding. This chain is Chaperonin GroEL, found in Buchnera aphidicola subsp. Thelaxes suberi.